A 188-amino-acid chain; its full sequence is Elongation factor P (188 aa).

This sequence belongs to the elongation factor P family.

The protein resides in the cytoplasm. The protein operates within protein biosynthesis; polypeptide chain elongation. Functionally, involved in peptide bond synthesis. Stimulates efficient translation and peptide-bond synthesis on native or reconstituted 70S ribosomes in vitro. Probably functions indirectly by altering the affinity of the ribosome for aminoacyl-tRNA, thus increasing their reactivity as acceptors for peptidyl transferase. The polypeptide is Elongation factor P (Gluconacetobacter diazotrophicus (strain ATCC 49037 / DSM 5601 / CCUG 37298 / CIP 103539 / LMG 7603 / PAl5)).